A 151-amino-acid polypeptide reads, in one-letter code: Coiled-coil-helix-coiled-coil-helix domain-containing protein 2 (151 aa).

Disordered regions lie at residues 1-50 and 77-111; these read MPRG…AAAP and GHAI…AQQQ. Residues 10-26 are compositionally biased toward low complexity; it reads SRMAPPASRAPQMRAAP. A compositionally biased stretch (pro residues) spans 27–38; sequence RPAPVAQPPAAA. Low complexity-rich tracts occupy residues 39–50 and 100–111; these read PPSAVGSSAAAP and QEPQGTQPAQQQ. Residues 111 to 151 enclose the CHCH domain; that stretch reads QQPCLYEIKQFLECAQNQGDIKLCEGFNEVLKQCRLANGLA. 2 consecutive short sequence motifs (cx9C motif) follow at residues 114–124 and 134–144; these read CLYEIKQFLEC and CEGFNEVLKQC. 2 disulfides stabilise this stretch: Cys114–Cys144 and Cys124–Cys134.

Interacts with RBPJ.

It localises to the nucleus. The protein localises to the mitochondrion. Its subcellular location is the mitochondrion intermembrane space. Its function is as follows. Transcription factor. Binds to the oxygen responsive element of COX4I2 and activates its transcription under hypoxia conditions (4% oxygen), as well as normoxia conditions (20% oxygen). This Homo sapiens (Human) protein is Coiled-coil-helix-coiled-coil-helix domain-containing protein 2 (CHCHD2).